A 260-amino-acid chain; its full sequence is MNPITPSEFRQSVRRGAFRGPTAGHCGPFAQANLAILPDAYAHDFLRFCQANPKACPLLGVGEPGAFRLDVLGDDLDIRTDVPSYNVYRDGRLTERVDSLEALWRDDFVAFAIGCSFSFEDMLAREGIALRHVEEGRNVPMYRTSIPNRRAGVFGGQLVVSMRPMRGADAIRAVQITSRFPGVHGAPIHLGDPRELGIADLGAPDFGDAVTIREGELPVFWACGVTPQTALMEAKLPLAIAHTPGHMLMTDITNASLAVF.

This sequence belongs to the D-glutamate cyclase family.

In Burkholderia multivorans (strain ATCC 17616 / 249), this protein is Putative hydro-lyase Bmul_5125/BMULJ_03391.